Consider the following 255-residue polypeptide: Electron transfer flavoprotein subunit beta (255 aa).

Ala2 is subject to N-acetylalanine. Residues Ala9, 39–42 (NPFC), Cys66, and 123–134 (GKQAIDDDCNQT) each bind AMP. Positions 183-205 (ADLRLNEPRYATLPNIMKAKKKK) are recognition loop. Residue Lys200 is modified to N6,N6,N6-trimethyllysine; by ETFBKMT; alternate. The residue at position 200 (Lys200) is an N6-acetyllysine; alternate. N6-methyllysine; alternate is present on Lys200. Lys203 carries the N6,N6,N6-trimethyllysine; by ETFBKMT modification. Lys210 bears the N6-acetyllysine; alternate mark. N6-succinyllysine; alternate is present on Lys210. Phosphoserine is present on residues Ser223 and Ser226. Lys238 is modified (N6-acetyllysine). Lys248 carries the post-translational modification N6-acetyllysine; alternate. Lys248 carries the post-translational modification N6-succinyllysine; alternate.

This sequence belongs to the ETF beta-subunit/FixA family. In terms of assembly, heterodimer composed of ETFA and ETFB. Identified in a complex that contains ETFA, ETFB and ETFRF1. Interacts with ACADM. Methylated. Trimethylation at Lys-200 and Lys-203 may negatively regulate the activity in electron transfer from acyl-CoA dehydrogenases.

It localises to the mitochondrion matrix. In terms of biological role, heterodimeric electron transfer flavoprotein that accepts electrons from several mitochondrial dehydrogenases, including acyl-CoA dehydrogenases, glutaryl-CoA and sarcosine dehydrogenase. It transfers the electrons to the main mitochondrial respiratory chain via ETF-ubiquinone oxidoreductase. Required for normal mitochondrial fatty acid oxidation and normal amino acid metabolism. ETFB binds an AMP molecule that probably has a purely structural role. The protein is Electron transfer flavoprotein subunit beta of Mus musculus (Mouse).